Consider the following 350-residue polypeptide: Anthranilate phosphoribosyltransferase (350 aa).

5-phospho-alpha-D-ribose 1-diphosphate contacts are provided by residues Gly88, 91–92, Thr96, 98–101, 116–124, and Ser128; these read GD, NIST, and KHGGRSVSS. Gly88 contacts anthranilate. Ser100 contacts Mg(2+). An anthranilate-binding site is contributed by Arg174. 2 residues coordinate Mg(2+): Asp233 and Glu234.

It belongs to the anthranilate phosphoribosyltransferase family. In terms of assembly, homodimer. Mg(2+) serves as cofactor.

The enzyme catalyses N-(5-phospho-beta-D-ribosyl)anthranilate + diphosphate = 5-phospho-alpha-D-ribose 1-diphosphate + anthranilate. Its pathway is amino-acid biosynthesis; L-tryptophan biosynthesis; L-tryptophan from chorismate: step 2/5. In terms of biological role, catalyzes the transfer of the phosphoribosyl group of 5-phosphorylribose-1-pyrophosphate (PRPP) to anthranilate to yield N-(5'-phosphoribosyl)-anthranilate (PRA). The chain is Anthranilate phosphoribosyltransferase from Albidiferax ferrireducens (strain ATCC BAA-621 / DSM 15236 / T118) (Rhodoferax ferrireducens).